Reading from the N-terminus, the 337-residue chain is UDP-3-O-acylglucosamine N-acyltransferase 2 (337 aa).

The active-site Proton acceptor is His238.

The protein belongs to the transferase hexapeptide repeat family. LpxD subfamily. As to quaternary structure, homotrimer.

The catalysed reaction is a UDP-3-O-[(3R)-3-hydroxyacyl]-alpha-D-glucosamine + a (3R)-hydroxyacyl-[ACP] = a UDP-2-N,3-O-bis[(3R)-3-hydroxyacyl]-alpha-D-glucosamine + holo-[ACP] + H(+). It participates in bacterial outer membrane biogenesis; LPS lipid A biosynthesis. Functionally, catalyzes the N-acylation of UDP-3-O-acylglucosamine using 3-hydroxyacyl-ACP as the acyl donor. Is involved in the biosynthesis of lipid A, a phosphorylated glycolipid that anchors the lipopolysaccharide to the outer membrane of the cell. This chain is UDP-3-O-acylglucosamine N-acyltransferase 2, found in Francisella tularensis subsp. tularensis (strain FSC 198).